Here is a 139-residue protein sequence, read N- to C-terminus: Nucleoside diphosphate kinase (139 aa).

ATP-binding residues include lysine 11, phenylalanine 59, arginine 87, threonine 93, arginine 104, and asparagine 114. The Pros-phosphohistidine intermediate role is filled by histidine 117.

The protein belongs to the NDK family. As to quaternary structure, homotetramer. Requires Mg(2+) as cofactor.

It is found in the cytoplasm. The enzyme catalyses a 2'-deoxyribonucleoside 5'-diphosphate + ATP = a 2'-deoxyribonucleoside 5'-triphosphate + ADP. It carries out the reaction a ribonucleoside 5'-diphosphate + ATP = a ribonucleoside 5'-triphosphate + ADP. Functionally, major role in the synthesis of nucleoside triphosphates other than ATP. The ATP gamma phosphate is transferred to the NDP beta phosphate via a ping-pong mechanism, using a phosphorylated active-site intermediate. This chain is Nucleoside diphosphate kinase, found in Coxiella burnetii (strain CbuK_Q154) (Coxiella burnetii (strain Q154)).